Consider the following 309-residue polypeptide: MSEINISAAAVKELREKTGAGMMDCKKALIETSGNFEEAIDFLRKKGLAVAAKKAGRIASEGLTAAKVDGLTGVVIEVNSETDFVARNEQFQALVKDIANLAVIAKTIDTLKTFKMQSGKSVEEEIIENIATIGENLTLRRMDILEISEGAIGSYVHNEVVPNLGKISVLVGLASNAKDKAKLEALAKQIAVHVAGNNPQSIDDSGLDQALVERERKVFFEKSKEEGKPDNIIEKMVEGRIRKFFSEVVLLQQNFLFEPKLTVAEVIKNAEKELGAAIKIAKFIRYELGEGIEHGEKNFADEVAAITQG.

An involved in Mg(2+) ion dislocation from EF-Tu region spans residues 82-85 (TDFV).

The protein belongs to the EF-Ts family.

It localises to the cytoplasm. In terms of biological role, associates with the EF-Tu.GDP complex and induces the exchange of GDP to GTP. It remains bound to the aminoacyl-tRNA.EF-Tu.GTP complex up to the GTP hydrolysis stage on the ribosome. This chain is Elongation factor Ts, found in Rickettsia massiliae (strain Mtu5).